The chain runs to 142 residues: Transcriptional regulator MraZ (142 aa).

2 SpoVT-AbrB domains span residues 5-51 and 77-120; these read ASAL…PRPE and AMDV…DAQT.

The protein belongs to the MraZ family. In terms of assembly, forms oligomers.

The protein localises to the cytoplasm. The protein resides in the nucleoid. The chain is Transcriptional regulator MraZ from Paraburkholderia phytofirmans (strain DSM 17436 / LMG 22146 / PsJN) (Burkholderia phytofirmans).